A 266-amino-acid chain; its full sequence is Undecaprenyl-diphosphatase (266 aa).

Helical transmembrane passes span 38-58 (SDMF…IIYW), 80-100 (LIVA…VLHF), 108-128 (PIAW…WAAA), 136-156 (ITWL…IFPG), 176-196 (AAAT…ASGY), 217-237 (IAFV…LAYI), and 245-265 (FAVY…TGLI).

The protein belongs to the UppP family.

It is found in the cell inner membrane. The enzyme catalyses di-trans,octa-cis-undecaprenyl diphosphate + H2O = di-trans,octa-cis-undecaprenyl phosphate + phosphate + H(+). Its function is as follows. Catalyzes the dephosphorylation of undecaprenyl diphosphate (UPP). Confers resistance to bacitracin. In Rhizobium leguminosarum bv. trifolii (strain WSM2304), this protein is Undecaprenyl-diphosphatase.